Reading from the N-terminus, the 242-residue chain is MIILPAIDLKEGKCIRLYQGDFKASKVVAEDPIEVALKFKENGAEYIHIVDLDGALTGEIKNLSIISYIIKTINIPVELGGGIRNLNTIDMLIDAGIERVILGTAALNNRGLVEKAVKKYDEKIAIGIDAKNEKVAINGWLNVSSINYIDFAKEMEKIGVRNIIFTDISKDGTLKGPNLDQLKKLNESISCNVIASGGIKDIEDLKVIKEMDVYGAIVGKAIYSGNINLNEAIKIINKESSK.

Asp8 functions as the Proton acceptor in the catalytic mechanism. Residue Asp129 is the Proton donor of the active site.

The protein belongs to the HisA/HisF family.

Its subcellular location is the cytoplasm. The catalysed reaction is 1-(5-phospho-beta-D-ribosyl)-5-[(5-phospho-beta-D-ribosylamino)methylideneamino]imidazole-4-carboxamide = 5-[(5-phospho-1-deoxy-D-ribulos-1-ylimino)methylamino]-1-(5-phospho-beta-D-ribosyl)imidazole-4-carboxamide. Its pathway is amino-acid biosynthesis; L-histidine biosynthesis; L-histidine from 5-phospho-alpha-D-ribose 1-diphosphate: step 4/9. This Clostridium botulinum (strain Langeland / NCTC 10281 / Type F) protein is 1-(5-phosphoribosyl)-5-[(5-phosphoribosylamino)methylideneamino] imidazole-4-carboxamide isomerase.